Here is a 213-residue protein sequence, read N- to C-terminus: 3-isopropylmalate dehydratase small subunit (213 aa).

Belongs to the LeuD family. LeuD type 1 subfamily. In terms of assembly, heterodimer of LeuC and LeuD.

The enzyme catalyses (2R,3S)-3-isopropylmalate = (2S)-2-isopropylmalate. Its pathway is amino-acid biosynthesis; L-leucine biosynthesis; L-leucine from 3-methyl-2-oxobutanoate: step 2/4. Its function is as follows. Catalyzes the isomerization between 2-isopropylmalate and 3-isopropylmalate, via the formation of 2-isopropylmaleate. The sequence is that of 3-isopropylmalate dehydratase small subunit from Pseudomonas savastanoi pv. phaseolicola (strain 1448A / Race 6) (Pseudomonas syringae pv. phaseolicola (strain 1448A / Race 6)).